Here is a 133-residue protein sequence, read N- to C-terminus: Histone H2A.1 (133 aa).

Residues 1-23 (MSTTGKGGKAKGKTASSKQVSRS) are disordered. Serine 2 bears the N-acetylserine mark. 5 positions are modified to N6-acetyllysine: lysine 6, lysine 9, lysine 11, lysine 13, and lysine 18. Serine 123 carries the phosphoserine modification. A Glycyl lysine isopeptide (Lys-Gly) (interchain with G-Cter in ubiquitin) cross-link involves residue lysine 124.

It belongs to the histone H2A family. As to quaternary structure, the nucleosome is a histone octamer containing two molecules each of H2A, H2B, H3 and H4 assembled in one H3-H4 heterotetramer and two H2A-H2B heterodimers. The octamer wraps approximately 147 bp of DNA. In terms of processing, monoubiquitination of Lys-124 gives a specific tag for epigenetic transcriptional repression. Post-translationally, acetylation occurs almost exclusively in the MAC.

The protein resides in the nucleus. It localises to the chromosome. Its function is as follows. Core component of nucleosome. Nucleosomes wrap and compact DNA into chromatin, limiting DNA accessibility to the cellular machineries which require DNA as a template. Histones thereby play a central role in transcription regulation, DNA repair, DNA replication and chromosomal stability. DNA accessibility is regulated via a complex set of post-translational modifications of histones, also called histone code, and nucleosome remodeling. In Tetrahymena thermophila (strain SB210), this protein is Histone H2A.1 (HTA2).